We begin with the raw amino-acid sequence, 485 residues long: Bindin (485 aa).

A signal peptide spans 1 to 20 (MGFHQISVIIVVLALASARA). The propeptide occupies 21 to 247 (ADEFPSHTDT…DSERGARKKR (227 aa)). 3 disordered regions span residues 157–195 (GETR…DLAP), 219–273 (ISGH…PAQQ), and 305–331 (GGGQ…SDSL). Residues 172–192 (DVSKRASPRKGDEPAGHKLKD) are compositionally biased toward basic and acidic residues. Positions 250-264 (NQGNYPQAMNPQSRG) are enriched in polar residues. Positions 317-331 (AEADNADYDEYSDSL) are enriched in acidic residues. The segment at 371 to 379 (LRHLRHHSN) is fucose-binding domain. The segment at 459–485 (QQGMGGVPQRMGGQPQGNAYNQGYRQG) is disordered. Residues 465-475 (VPQRMGGQPQG) show a composition bias toward low complexity. The segment covering 476–485 (NAYNQGYRQG) has biased composition (polar residues).

Belongs to the bindin family.

The protein localises to the cytoplasmic vesicle. It localises to the secretory vesicle. It is found in the acrosome lumen. Species-specific sea urchin sperm protein required for adhesion of sperm to the egg surface during fertilization. Bindin coats the acrosomal process after it is externalized by the acrosome reaction. It binds to sulfated, fucose-containing polysaccharides on the vitelline layer receptor proteoglycans which cover the egg plasma membrane. This is Bindin from Mesocentrotus franciscanus (Giant red sea urchin).